A 358-amino-acid polypeptide reads, in one-letter code: Na(+)/H(+) exchange regulatory cofactor NHE-RF1 (358 aa).

N-acetylserine is present on S2. Phosphoserine is present on residues S2 and S46. Residues 14-94 (LCCLEKGPNG…AVRLLVVDPD (81 aa)) enclose the PDZ 1 domain. A compositionally biased stretch (low complexity) spans 114–134 (QAGPEQAGPPAAPGEQGPAGE). The interval 114 to 151 (QAGPEQAGPPAAPGEQGPAGENEPREVEKSHPERRELR) is disordered. A compositionally biased stretch (basic and acidic residues) spans 135–151 (NEPREVEKSHPERRELR). The PDZ 2 domain maps to 154-234 (LCAMKKGPNG…EAKLLVVDKE (81 aa)). Residues 247–358 (SSEHLNGPLP…SEKKELFSNL (112 aa)) are disordered. The span at 272–290 (LAPAASESPRPALARSASS) shows a compositional bias: low complexity. Phosphoserine is present on residues S279, S289, and S290. T292 is modified (phosphothreonine). Phosphoserine occurs at positions 293, 298, and 301. Positions 308–327 (TAPSSTSSSSDPILDFSISL) are enriched in low complexity. Residues 348–358 (WSEKKELFSNL) show a composition bias toward basic and acidic residues.

As to quaternary structure, homodimer, and heterodimer with NHERF2. Binds the N-termini of EZR, RDX and MSN. Binds the C-termini of PDGFRA, PDGFRB, ADRB2, NOS2 and CFTR. Binds ARHGAP17, EPI64, RACK1, OPRK1, GNAQ, CTNNB1 and PLCB3. Binds PDZK1. Interacts with CLCN3. Binds the C-terminus of PAG1. In resting T-cells, part of a PAG1-NHERF1-MSN complex which is disrupted upon TCR activation. Forms a complex with CFTR and SLC4A7. Forms a complex with SLC4A7 and ATP6V1B1. Interacts with TRPC4 (via the PDZ-binding domain). Directly interacts with HTR4. Interacts (via the PDZ 1 domain) with PODXL (via the C-terminal PDZ-binding motif DTHL); interaction is not detected in glomerular epithelium cells. Interacts (via the PDZ 1 domain) with PODXL (via the C-terminal PDZ-binding motif DTHL); the interaction take place early in the secretory pathway and is necessary for its apical membrane sorting. Interacts with SLC26A3. Interacts with MCC. Interacts with SLC34A1. Interacts (via the PDZ domains) with SLC26A6 isoform 4 and isoform 5. Interacts (via PDZ domains) with ACE2 (via PDZ-binding motif); the interaction may enhance ACE2 membrane residence. Post-translationally, phosphorylated on serine residues. As to expression, detected in ileum, duodenum and in kidney, where it is found in the glomerulus, the proximal tubule, the thick ascending limb of Henle's loop and the cortical collecting duct.

It localises to the cytoplasm. The protein localises to the apical cell membrane. It is found in the cell projection. Its subcellular location is the filopodium. The protein resides in the ruffle. It localises to the microvillus. The protein localises to the endomembrane system. In terms of biological role, scaffold protein that connects plasma membrane proteins with members of the ezrin/moesin/radixin family and thereby helps to link them to the actin cytoskeleton and to regulate their surface expression. Necessary for recycling of internalized ADRB2. Was first known to play a role in the regulation of the activity and subcellular location of SLC9A3. Necessary for cAMP-mediated phosphorylation and inhibition of SLC9A3. Involved in sperm capacitation. May participate in the regulation of the chloride and bicarbonate homeostasis in spermatozoa. May enhance Wnt signaling. May participate in HTR4 targeting to microvilli. Involved in the regulation of phosphate reabsorption in the renal proximal tubules. The protein is Na(+)/H(+) exchange regulatory cofactor NHE-RF1 (NHERF1) of Oryctolagus cuniculus (Rabbit).